The following is a 308-amino-acid chain: Ribosomal RNA large subunit methyltransferase F (308 aa).

The protein belongs to the methyltransferase superfamily. METTL16/RlmF family.

It is found in the cytoplasm. It carries out the reaction adenosine(1618) in 23S rRNA + S-adenosyl-L-methionine = N(6)-methyladenosine(1618) in 23S rRNA + S-adenosyl-L-homocysteine + H(+). Its function is as follows. Specifically methylates the adenine in position 1618 of 23S rRNA. The chain is Ribosomal RNA large subunit methyltransferase F from Shigella boydii serotype 18 (strain CDC 3083-94 / BS512).